A 377-amino-acid chain; its full sequence is WAT1-related protein At5g13670 (377 aa).

Transmembrane regions (helical) follow at residues 9-29, 38-58, 64-84, 99-119, 136-156, 187-207, 214-234, 251-271, 279-299, and 303-323; these read FIAI…AKLA, VLVA…ALIL, PKLT…EPVV, TFTS…ACVF, VGTM…GNVI, IMLV…AKIL, LSLT…MGLI, LLAS…IGWA, FVSA…TFVF, and VYVG…LVLW. 2 EamA domains span residues 18–149 and 194–322; these read LYAL…MLMT and FSWS…YLVL.

The protein belongs to the drug/metabolite transporter (DMT) superfamily. Plant drug/metabolite exporter (P-DME) (TC 2.A.7.4) family.

Its subcellular location is the membrane. The protein is WAT1-related protein At5g13670 of Arabidopsis thaliana (Mouse-ear cress).